The chain runs to 102 residues: Large ribosomal subunit protein uL24 (102 aa).

The protein belongs to the universal ribosomal protein uL24 family. In terms of assembly, part of the 50S ribosomal subunit.

In terms of biological role, one of two assembly initiator proteins, it binds directly to the 5'-end of the 23S rRNA, where it nucleates assembly of the 50S subunit. Functionally, one of the proteins that surrounds the polypeptide exit tunnel on the outside of the subunit. The chain is Large ribosomal subunit protein uL24 from Limosilactobacillus reuteri (strain DSM 20016) (Lactobacillus reuteri).